The following is a 216-amino-acid chain: RNA pyrophosphohydrolase (216 aa).

One can recognise a Nudix hydrolase domain in the interval 6–149 (GFRPNVGIIL…KRDVYQLALT (144 aa)). Residues 38–59 (GGIKYGETPMQAMYRELHEETG) carry the Nudix box motif. The interval 159–188 (AQRTDKSRGPRAPRYPRVANGHAASEAPAA) is disordered.

The protein belongs to the Nudix hydrolase family. RppH subfamily. The cofactor is a divalent metal cation.

Accelerates the degradation of transcripts by removing pyrophosphate from the 5'-end of triphosphorylated RNA, leading to a more labile monophosphorylated state that can stimulate subsequent ribonuclease cleavage. This Burkholderia mallei (strain NCTC 10247) protein is RNA pyrophosphohydrolase.